The primary structure comprises 404 residues: MSTLFFTFSLLLLAPLLVISSIQDPELVVQDVHRSINASLTRRNLGYLSCGSGNPIDRLLAMQPQLGKKSPAFSYCAIGFGKNAIGGKNGRIYVVTDSGNDDPVNPKPGTLRHAVIQDEPLWIIFKRDMVIQLKQELVMNSYKTIDGRGASVHISGGPCITIHHTSNIIIHGINIHDCKQSGNGNIRDSPNHSGWWDVSDGDGISIFGGKNIWVDHCSLSNCHDGLIDAIHGSTAITISNNYFTHHDKVMLLGHSDSFTQDKGMQVTVAFNHFGEGLVQRMPRCRHGYFHVVNNDYTHWEMYAIGGSAAPTINSQGNRFLAPNEKYRKEVTKHEDAPESQWRSWNWRSEGDLMLNGAYFRQTGAGASSSSTYARASSLSARPSSLVGSITTNAGPVNCKKGSRC.

An N-terminal signal peptide occupies residues 1 to 20; sequence MSTLFFTFSLLLLAPLLVIS. A glycan (N-linked (GlcNAc...) asparagine) is linked at Asn-37. Residues Cys-159 and Cys-178 are joined by a disulfide bond. N-linked (GlcNAc...) asparagine glycosylation occurs at Asn-191. Residues Asp-200, Asp-202, Asp-224, and Asp-228 each contribute to the Ca(2+) site. Arg-280 is an active-site residue.

Belongs to the polysaccharide lyase 1 family. It depends on Ca(2+) as a cofactor. As to expression, predominantly found in the pistil where it is found in the outer five layers of the strands of transmitting tissue within the upper two-thirds of the style. Found at much lower levels in the anthers and vegetative organs.

It localises to the secreted. The catalysed reaction is Eliminative cleavage of (1-&gt;4)-alpha-D-galacturonan to give oligosaccharides with 4-deoxy-alpha-D-galact-4-enuronosyl groups at their non-reducing ends.. It participates in glycan metabolism; pectin degradation; 2-dehydro-3-deoxy-D-gluconate from pectin: step 2/5. In terms of biological role, may have a role in the development of the transmitting tissue of the style and/or in the events related to pollination such as some aspect in the facilitation of compatible pollen tube growth. The chain is Probable pectate lyase 18 from Solanum lycopersicum (Tomato).